The sequence spans 115 residues: SPbeta prophage-derived uncharacterized protein YoqS (115 aa).

In Bacillus subtilis (strain 168), this protein is SPbeta prophage-derived uncharacterized protein YoqS (yoqS).